Here is a 298-residue protein sequence, read N- to C-terminus: Probable porphobilinogen deaminase (298 aa).

Cysteine 241 carries the S-(dipyrrolylmethanemethyl)cysteine modification.

The protein belongs to the HMBS family. Dipyrromethane is required as a cofactor.

It carries out the reaction 4 porphobilinogen + H2O = hydroxymethylbilane + 4 NH4(+). It participates in porphyrin-containing compound metabolism; protoporphyrin-IX biosynthesis; coproporphyrinogen-III from 5-aminolevulinate: step 2/4. Its function is as follows. Tetrapolymerization of the monopyrrole PBG into the hydroxymethylbilane pre-uroporphyrinogen in several discrete steps. The chain is Probable porphobilinogen deaminase from Methanopyrus kandleri (strain AV19 / DSM 6324 / JCM 9639 / NBRC 100938).